We begin with the raw amino-acid sequence, 232 residues long: Rho-related GTP-binding protein Rho6 (232 aa).

GTP contacts are provided by residues 23-28 (QCGKTA), 38-45 (YPETYVPT), 67-71 (DTSGS), 125-128 (CKTD), and 169-170 (AF). The Effector region signature appears at 42-50 (YVPTVFENY). Cysteine 229 is subject to Cysteine methyl ester. Cysteine 229 carries the S-geranylgeranyl cysteine lipid modification. Residues 230–232 (SIM) constitute a propeptide, removed in mature form.

Belongs to the small GTPase superfamily. Rho family. As to quaternary structure, binds GRB7 and PLXNB1. Interacts with PLXNA2. Interacts with UBXD5.

Its subcellular location is the cell membrane. The protein resides in the cytoplasm. The protein localises to the cytoskeleton. Functionally, lacks intrinsic GTPase activity. Has a low affinity for GDP, and constitutively binds GTP. Controls rearrangements of the actin cytoskeleton. Induces the Rac-dependent neuritic process formation in part by disruption of the cortical actin filaments. Causes the formation of many neuritic processes from the cell body with disruption of the cortical actin filaments. The protein is Rho-related GTP-binding protein Rho6 (Rnd1) of Mus musculus (Mouse).